We begin with the raw amino-acid sequence, 332 residues long: Formamidase (332 aa).

Residues 14–259 (FLTALIQYPV…WEIVTAEVYP (246 aa)) enclose the CN hydrolase domain. Residue E60 is the Proton acceptor of the active site. K132 acts as the Proton donor in catalysis. C165 (nucleophile) is an active-site residue.

Belongs to the carbon-nitrogen hydrolase superfamily. Aliphatic amidase family.

The catalysed reaction is formamide + H2O = formate + NH4(+). In terms of biological role, is an aliphatic amidase with a restricted substrate specificity, as it only hydrolyzes formamide. The chain is Formamidase from Bacillus cereus (strain ZK / E33L).